Here is a 338-residue protein sequence, read N- to C-terminus: Phenylalanine--tRNA ligase alpha subunit (338 aa).

Residues 71 to 101 are disordered; the sequence is QFEEKRSSLSQQTSSSDTYQSLPDLTLPGRQ. Over residues 78–92 the composition is skewed to low complexity; sequence SLSQQTSSSDTYQSL. Glutamate 253 contributes to the Mg(2+) binding site.

It belongs to the class-II aminoacyl-tRNA synthetase family. Phe-tRNA synthetase alpha subunit type 1 subfamily. In terms of assembly, tetramer of two alpha and two beta subunits. It depends on Mg(2+) as a cofactor.

It localises to the cytoplasm. It catalyses the reaction tRNA(Phe) + L-phenylalanine + ATP = L-phenylalanyl-tRNA(Phe) + AMP + diphosphate + H(+). This is Phenylalanine--tRNA ligase alpha subunit from Desulfotalea psychrophila (strain LSv54 / DSM 12343).